The primary structure comprises 122 residues: Large ribosomal subunit protein uL18 (122 aa).

Residues 1 to 16 (MFKKVDRKASRQKKQM) are compositionally biased toward basic residues. A disordered region spans residues 1 to 29 (MFKKVDRKASRQKKQMSIRNKISGTPERP).

It belongs to the universal ribosomal protein uL18 family. Part of the 50S ribosomal subunit; part of the 5S rRNA/L5/L18/L25 subcomplex. Contacts the 5S and 23S rRNAs.

In terms of biological role, this is one of the proteins that bind and probably mediate the attachment of the 5S RNA into the large ribosomal subunit, where it forms part of the central protuberance. The protein is Large ribosomal subunit protein uL18 of Fusobacterium nucleatum subsp. nucleatum (strain ATCC 25586 / DSM 15643 / BCRC 10681 / CIP 101130 / JCM 8532 / KCTC 2640 / LMG 13131 / VPI 4355).